A 184-amino-acid polypeptide reads, in one-letter code: UPF0301 protein Sden_2674 (184 aa).

This sequence belongs to the UPF0301 (AlgH) family.

This is UPF0301 protein Sden_2674 from Shewanella denitrificans (strain OS217 / ATCC BAA-1090 / DSM 15013).